The primary structure comprises 132 residues: Fatty acid-binding protein, intestinal (132 aa).

An N-acetylalanine modification is found at Ala2. Hexadecanoate contacts are provided by Trp83 and Arg107. Tetradecanoate is bound by residues Trp83 and Arg107.

It belongs to the calycin superfamily. Fatty-acid binding protein (FABP) family. In terms of tissue distribution, expressed in the small intestine and at much lower levels in the large intestine. Highest expression levels in the jejunum.

The protein resides in the cytoplasm. In terms of biological role, FABPs are thought to play a role in the intracellular transport of long-chain fatty acids and their acyl-CoA esters. FABP2 is probably involved in triglyceride-rich lipoprotein synthesis. Binds saturated long-chain fatty acids with a high affinity, but binds with a lower affinity to unsaturated long-chain fatty acids. FABP2 may also help maintain energy homeostasis by functioning as a lipid sensor. In Homo sapiens (Human), this protein is Fatty acid-binding protein, intestinal (FABP2).